The sequence spans 306 residues: Agmatinase (306 aa).

Residues histidine 126, aspartate 149, histidine 151, aspartate 153, aspartate 230, and aspartate 232 each coordinate Mn(2+).

Belongs to the arginase family. Agmatinase subfamily. Requires Mn(2+) as cofactor.

The enzyme catalyses agmatine + H2O = urea + putrescine. It functions in the pathway amine and polyamine biosynthesis; putrescine biosynthesis via agmatine pathway; putrescine from agmatine: step 1/1. Catalyzes the formation of putrescine from agmatine. This Enterobacter sp. (strain 638) protein is Agmatinase.